A 37-amino-acid chain; its full sequence is Large ribosomal subunit protein bL36 (37 aa).

This sequence belongs to the bacterial ribosomal protein bL36 family.

This Borreliella afzelii (strain PKo) (Borrelia afzelii) protein is Large ribosomal subunit protein bL36.